Reading from the N-terminus, the 155-residue chain is SsrA-binding protein (155 aa).

The tract at residues 135–155 (KRQDIKQRDVERETRREIMRH) is disordered.

The protein belongs to the SmpB family.

It localises to the cytoplasm. In terms of biological role, required for rescue of stalled ribosomes mediated by trans-translation. Binds to transfer-messenger RNA (tmRNA), required for stable association of tmRNA with ribosomes. tmRNA and SmpB together mimic tRNA shape, replacing the anticodon stem-loop with SmpB. tmRNA is encoded by the ssrA gene; the 2 termini fold to resemble tRNA(Ala) and it encodes a 'tag peptide', a short internal open reading frame. During trans-translation Ala-aminoacylated tmRNA acts like a tRNA, entering the A-site of stalled ribosomes, displacing the stalled mRNA. The ribosome then switches to translate the ORF on the tmRNA; the nascent peptide is terminated with the 'tag peptide' encoded by the tmRNA and targeted for degradation. The ribosome is freed to recommence translation, which seems to be the essential function of trans-translation. The protein is SsrA-binding protein of Oleidesulfovibrio alaskensis (strain ATCC BAA-1058 / DSM 17464 / G20) (Desulfovibrio alaskensis).